Here is a 516-residue protein sequence, read N- to C-terminus: H/ACA ribonucleoprotein complex subunit DKC1 (516 aa).

The tract at residues 1–24 is disordered; it reads MADGDGSSVKKRRKKDKRSLPDED. The active-site Nucleophile is Asp123. One can recognise a PUA domain in the interval 294–369; that stretch reads HKRLVMKDSA…VVAKIKRVIM (76 aa). Residues 422–516 are disordered; that stretch reads KKEAAKVPQA…KQKEVEESSE (95 aa). Residues 434–446 are compositionally biased toward basic and acidic residues; sequence EVERAPKRKRESE. Residues 453 to 464 show a composition bias toward pro residues; the sequence is SPPPSPATPPPE. Residues 463 to 516 are a coiled coil; it reads PEELSKKEKKKKKKEKKAKEAAESGEEQVEVISESSAKKKKKKKKQKEVEESSE. The span at 469–478 shows a compositional bias: basic residues; the sequence is KEKKKKKKEK.

It belongs to the pseudouridine synthase TruB family. In terms of assembly, part of the H/ACA small nucleolar ribonucleoprotein (H/ACA snoRNP) complex, which contains NHP2/NOLA2, GAR1/NOLA1, NOP10/NOLA3, and DKC1/NOLA4, which is presumed to be the catalytic subunit. The complex contains a stable core formed by binding of one or two NOP10-DKC1 heterodimers to NHP2; GAR1 subsequently binds to this core via DKC1. The complex binds a box H/ACA small nucleolar RNA (snoRNA), which may target the specific site of modification within the RNA substrate.

It is found in the nucleus. It localises to the nucleolus. The protein localises to the cajal body. It catalyses the reaction uridine in 5S rRNA = pseudouridine in 5S rRNA. Catalytic subunit of H/ACA small nucleolar ribonucleoprotein (H/ACA snoRNP) complex, which catalyzes pseudouridylation of rRNA. This involves the isomerization of uridine such that the ribose is subsequently attached to C5, instead of the normal N1. Each rRNA can contain up to 100 pseudouridine ('psi') residues, which may serve to stabilize the conformation of rRNAs. Required for ribosome biogenesis and telomere maintenance. The polypeptide is H/ACA ribonucleoprotein complex subunit DKC1 (DKC1) (Gallus gallus (Chicken)).